The primary structure comprises 294 residues: Diaminopimelate epimerase (294 aa).

Substrate contacts are provided by Asn15, Gln47, and Asn67. Cys76 acts as the Proton donor in catalysis. Substrate contacts are provided by residues 77–78 (GN), Asn163, Asn197, and 215–216 (ER). The Proton acceptor role is filled by Cys224. 225 to 226 (GS) is a substrate binding site.

It belongs to the diaminopimelate epimerase family. Homodimer.

The protein localises to the cytoplasm. It catalyses the reaction (2S,6S)-2,6-diaminopimelate = meso-2,6-diaminopimelate. It functions in the pathway amino-acid biosynthesis; L-lysine biosynthesis via DAP pathway; DL-2,6-diaminopimelate from LL-2,6-diaminopimelate: step 1/1. Catalyzes the stereoinversion of LL-2,6-diaminopimelate (L,L-DAP) to meso-diaminopimelate (meso-DAP), a precursor of L-lysine and an essential component of the bacterial peptidoglycan. In Mesorhizobium japonicum (strain LMG 29417 / CECT 9101 / MAFF 303099) (Mesorhizobium loti (strain MAFF 303099)), this protein is Diaminopimelate epimerase.